The chain runs to 1863 residues: Breast cancer type 1 susceptibility protein (1863 aa).

An N-acetylmethionine modification is found at methionine 1. An RING-type zinc finger spans residues 24–65 (CPICLELIKEPVSTKCDHIFCKFCMLKLLNQKKGPSQCPLCK). Residue lysine 109 forms a Glycyl lysine isopeptide (Lys-Gly) (interchain with G-Cter in SUMO2) linkage. Phosphoserine is present on serine 114. The interval 230–270 (ETDVTNTEHHQPSNNDLNTTEKRAAERHPEKYQGSSVSNLH) is disordered. The segment covering 248-260 (TTEKRAAERHPEK) has biased composition (basic and acidic residues). Residue lysine 301 forms a Glycyl lysine isopeptide (Lys-Gly) (interchain with G-Cter in SUMO2) linkage. The interval 306-338 (NKSKQPGLARSQHNRWAGSKETCNDRRTPSTEK) is disordered. Over residues 327 to 338 (TCNDRRTPSTEK) the composition is skewed to basic and acidic residues. Lysine 339 participates in a covalent cross-link: Glycyl lysine isopeptide (Lys-Gly) (interchain with G-Cter in SUMO2). Phosphoserine is present on residues serine 395, serine 398, serine 423, and serine 434. Residues lysine 443, lysine 459, and lysine 519 each participate in a glycyl lysine isopeptide (Lys-Gly) (interchain with G-Cter in SUMO2) cross-link. Low complexity predominate over residues 534–544 (QGTNQTEQNGQ). The disordered stretch occupies residues 534–570 (QGTNQTEQNGQVMNITNSGHENKTKGDSIQNEKNPNP). The residue at position 551 (serine 551) is a Phosphoserine. Residues lysine 583 and lysine 654 each participate in a glycyl lysine isopeptide (Lys-Gly) (interchain with G-Cter in SUMO2) cross-link. A disordered region spans residues 654–709 (KYNQMPVRHSRNLQLMEGKEPATGAKKSNKPNEQTSKRHDSDTFPELKLTNAPGSF). 3 positions are modified to phosphoserine: serine 694, serine 708, and serine 725. Residues lysine 734 and lysine 739 each participate in a glycyl lysine isopeptide (Lys-Gly) (interchain with G-Cter in SUMO2) cross-link. Phosphoserine is present on residues serine 753 and serine 840. Residues lysine 918 and lysine 987 each participate in a glycyl lysine isopeptide (Lys-Gly) (interchain with G-Cter in SUMO2) cross-link. Serine 988 carries the post-translational modification Phosphoserine; by CHEK2. Serine 1009 is subject to Phosphoserine. A Glycyl lysine isopeptide (Lys-Gly) (interchain with G-Cter in SUMO2) cross-link involves residue lysine 1079. Position 1143 is a phosphoserine; by ATR; in vitro (serine 1143). The segment at 1181 to 1216 (VQKGELSRSPSPFTHTHLAQGYRRGAKKLESSEENL) is disordered. Serine 1189, serine 1191, serine 1211, serine 1217, and serine 1218 each carry phosphoserine. The residue at position 1280 (serine 1280) is a Phosphoserine; by ATR; in vitro. The interval 1322–1387 (KQMRHQSESQ…VSEDCSGLSS (66 aa)) is disordered. Phosphoserine occurs at positions 1328, 1336, and 1342. Polar residues predominate over residues 1373 to 1387 (ESETSVSEDCSGLSS). Serine 1387 is subject to Phosphoserine; by ATM and ATR. Position 1394 is a phosphothreonine; by ATR; in vitro (threonine 1394). The interval 1397-1424 (RDTMQHNLIKLQQEMAELEAVLEQHGSQ) is interaction with PALB2. Serine 1423 carries the post-translational modification Phosphoserine; by ATM and ATR. The disordered stretch occupies residues 1440-1505 (EDLRNPEQST…SSPSKCPSLD (66 aa)). Residues 1445–1470 (PEQSTSEKAVLTSQKSSEYPISQNPE) show a composition bias toward polar residues. The residue at position 1457 (serine 1457) is a Phosphoserine; by ATR; in vitro. The residue at position 1524 (serine 1524) is a Phosphoserine; by ATM. A Phosphoserine modification is found at serine 1542. The disordered stretch occupies residues 1565 to 1596 (ESGISLFSDDPESDPSEDRAPESARVGNIPSS). BRCT domains follow at residues 1642–1736 (STER…DFEV) and 1756–1855 (QDRK…TYLI).

Heterodimer with BARD1. Part of the BRCA1-associated genome surveillance complex (BASC), which contains BRCA1, MSH2, MSH6, MLH1, ATM, BLM, PMS2 and the MRE11-RAD50-NBN protein (MRN) complex. This association could be a dynamic process changing throughout the cell cycle and within subnuclear domains. Component of the BRCA1-A complex, at least composed of BRCA1, BARD1, UIMC1/RAP80, ABRAXAS1, BRCC3/BRCC36, BABAM2 and BABAM1/NBA1. Interacts (via the BRCT domains) with ABRAXAS1 (phosphorylated form); this is important for recruitment to sites of DNA damage. Can form a heterotetramer with two molecules of ABRAXAS1 (phosphorylated form). Component of the BRCA1-RBBP8 complex. Interacts (via the BRCT domains) with RBBP8 ('Ser-327' phosphorylated form); the interaction ubiquitinates RBBP8, regulates CHEK1 activation, and involves RBBP8 in BRCA1-dependent G2/M checkpoint control on DNA damage. Associates with RNA polymerase II holoenzyme. Interacts with SMC1A, NELFB, DCLRE1C, CLSPN. Interacts with CHEK1, CHEK2, BAP1, BRCC3, UBXN1 and PCLAF. Interacts (via BRCT domains) with BRIP1 (phosphorylated form). Interacts with FANCD2 (ubiquitinated form). Interacts with H2AX (phosphorylated on 'Ser-140'). Interacts (via the BRCT domains) with ACACA (phosphorylated form); the interaction prevents dephosphorylation of ACACA. Part of a BRCA complex containing BRCA1, BRCA2 and PALB2. Interacts directly with PALB2; the interaction is essential for its function in HRR. Interacts directly with BRCA2; the interaction occurs only in the presence of PALB2 which serves as the bridging protein. Interacts (via the BRCT domains) with LMO4; the interaction represses the transcriptional activity of BRCA1. Interacts (via the BRCT domains) with CCAR2 (via N-terminus); the interaction represses the transcriptional activator activity of BRCA1. Interacts with EXD2. Interacts (via C-terminus) with DHX9; this interaction is direct and links BRCA1 to the RNA polymerase II holoenzyme. Interacts with DNA helicase ZGRF1; the interaction is increased following DNA damage induction. Phosphorylated in response to IR, UV, and various stimuli that cause checkpoint activation, probably by ATM or ATR. Phosphorylation at Ser-988 by CHEK2 regulates mitotic spindle assembly. Phosphorylation by AURKA regulates centrosomal microtubule nucleation. Post-translationally, autoubiquitinated, undergoes 'Lys-6'-linked polyubiquitination. 'Lys-6'-linked polyubiquitination does not promote degradation. Isoform 1 and isoform 3 are widely expressed. Isoform 3 is reduced or absent in several breast and ovarian cancer cell lines.

The protein localises to the nucleus. The protein resides in the chromosome. Its subcellular location is the cytoplasm. The enzyme catalyses S-ubiquitinyl-[E2 ubiquitin-conjugating enzyme]-L-cysteine + [acceptor protein]-L-lysine = [E2 ubiquitin-conjugating enzyme]-L-cysteine + N(6)-ubiquitinyl-[acceptor protein]-L-lysine.. Its pathway is protein modification; protein ubiquitination. With respect to regulation, the E3 ubiquitin-protein ligase activity is inhibited by phosphorylation by AURKA. Activity is increased by phosphatase treatment. Its function is as follows. E3 ubiquitin-protein ligase that specifically mediates the formation of 'Lys-6'-linked polyubiquitin chains and plays a central role in DNA repair by facilitating cellular responses to DNA damage. It is unclear whether it also mediates the formation of other types of polyubiquitin chains. The BRCA1-BARD1 heterodimer coordinates a diverse range of cellular pathways such as DNA damage repair, ubiquitination and transcriptional regulation to maintain genomic stability. Regulates centrosomal microtubule nucleation. Required for appropriate cell cycle arrests after ionizing irradiation in both the S-phase and the G2 phase of the cell cycle. Required for FANCD2 targeting to sites of DNA damage. Inhibits lipid synthesis by binding to inactive phosphorylated ACACA and preventing its dephosphorylation. Contributes to homologous recombination repair (HRR) via its direct interaction with PALB2, fine-tunes recombinational repair partly through its modulatory role in the PALB2-dependent loading of BRCA2-RAD51 repair machinery at DNA breaks. Component of the BRCA1-RBBP8 complex which regulates CHEK1 activation and controls cell cycle G2/M checkpoints on DNA damage via BRCA1-mediated ubiquitination of RBBP8. Acts as a transcriptional activator. This Homo sapiens (Human) protein is Breast cancer type 1 susceptibility protein (BRCA1).